The chain runs to 588 residues: Putative ABC transporter ATP-binding protein PAM_020 (588 aa).

ABC transporter domains lie at 6–247 and 317–551; these read IIFK…GIQE and LQLQ…TSLN. ATP is bound by residues 40–47 and 351–358; these read GKNGSGKS.

Belongs to the ABC transporter superfamily.

It is found in the cell membrane. Probably part of an ABC transporter complex. Responsible for energy coupling to the transport system. This chain is Putative ABC transporter ATP-binding protein PAM_020, found in Onion yellows phytoplasma (strain OY-M).